Reading from the N-terminus, the 328-residue chain is MELEVRHLRALCAIADAGSLHRAARRLGVAQPTLSTQLTRIEQALGGPLFTRERTGCRPTPLGRTVLGRARPLLTDMNTLVREARAAAAGGDSRLRVGSTASRALAGWLRRLRRPGLEPTLQMDVSANALLRRVTDGQLDVAFVHEVEGCALHIPEDLRLRVLVEREPQFVMLPADHPAAARPVVRLADLADDRWMVDPTVDGEWDGVHRMLRAVGLNPRVLHGDYHTAASLVATGEVVTVCQPSSQSRPDTAVRRLYGDPLGVRLLLAARTRAELDAVFPALEDAYWEAARQSTAYREWLEGGGIRTLPRCPVAATGGGRVEFVRAR.

The HTH lysR-type domain maps to 1–60 (MELEVRHLRALCAIADAGSLHRAARRLGVAQPTLSTQLTRIEQALGGPLFTRERTGCRPT). Positions 20–39 (LHRAARRLGVAQPTLSTQLT) form a DNA-binding region, H-T-H motif.

Belongs to the LysR transcriptional regulatory family.

Functionally, transcriptional trans-activator of the gene (mprA) for the small neutral protease. This Streptomyces coelicolor (strain ATCC BAA-471 / A3(2) / M145) protein is Small neutral protease regulatory protein (mprR).